The primary structure comprises 55 residues: MKIFFAVLVILVLFSMLIWTAYGTPYPVNCKTDRDCVMCGLGISCKNGYCQGCTR.

A signal peptide spans 1–23 (MKIFFAVLVILVLFSMLIWTAYG). 3 disulfide bridges follow: cysteine 30/cysteine 45, cysteine 36/cysteine 50, and cysteine 39/cysteine 53.

In terms of tissue distribution, expressed by the venom gland.

The protein localises to the secreted. The sequence is that of Neurotoxin BmP08 from Olivierus martensii (Manchurian scorpion).